We begin with the raw amino-acid sequence, 88 residues long: Conotoxin MaIr34 (88 aa).

An N-terminal signal peptide occupies residues 1–21 (MKLTCVIVAVLFLTAWTFVMA). Positions 22-53 (DDPRDGPDTAVRGGKRFWKARNEMNSAASKLN) are excised as a propeptide. Intrachain disulfides connect Cys57–Cys75, Cys64–Cys79, and Cys74–Cys83.

The protein belongs to the conotoxin O1 superfamily. In terms of tissue distribution, expressed by the venom duct.

The protein localises to the secreted. The protein is Conotoxin MaIr34 of Conus marmoreus (Marble cone).